Here is a 313-residue protein sequence, read N- to C-terminus: 2-oxoglutarate-dependent dioxygenase eupC (313 aa).

One can recognise a Fe2OG dioxygenase domain in the interval Pro-187–Gly-284. The Fe cation site is built by His-212, Asp-214, and His-263. Lys-274 contacts 2-oxoglutarate.

It belongs to the iron/ascorbate-dependent oxidoreductase family. The cofactor is Fe(2+).

It functions in the pathway secondary metabolite biosynthesis; terpenoid biosynthesis. Functionally, 2-oxoglutarate-dependent dioxygenase; part of the gene cluster that mediates the biosynthesis of eupenifeldin, a bistropolone meroterpenoid that acts as an antitumor agent. The first step of eupenifeldin biosynthesis is the biosynthesis of 3-methylorcinaldehyde performed by the non-reducing polyketide synthase eupA. Oxidative dearomatization of 3-methylorcinaldehyde likely catalyzed by the FAD-dependent monooxygenase eupB is followed by oxidative ring expansion by the 2-oxoglutarate-dependent dioxygenase eupC to provide the first tropolone metabolite, tropolone stipitaldehyde. In parallel, generation of sesquiterpene alpha-humulene from farnesylpyrophosphate (FPP) is catalyzed by the terpene cyclase eupE. The cytochrome P450 monooxygenase eupD then hydroxylates humulene to humulenol. The putative Diels-Alderase eupF probably catalyzes the formation of the tropolone-humulene skeleton by linking humulenol and the polyketide moiety. The short-chain dehydrogenase/reductase eupG and the flavin-dependent monooxygenase eupH are also essential for eupenifeldin biosynthesis and are likely the additional decorating enzymes of the tropolone-humulene skeleton to produce final eupenifeldin or derivatives. The polypeptide is 2-oxoglutarate-dependent dioxygenase eupC (Phoma sp).